The sequence spans 116 residues: Beta-2-microglobulin (116 aa).

An N-terminal signal peptide occupies residues 1 to 19 (MRAIITFALFCVLYITVQA). The region spanning 24–111 (PKVQVYSHFP…RHMSNTNAYS (88 aa)) is the Ig-like C1-type domain. A disulfide bond links Cys-44 and Cys-99.

It belongs to the beta-2-microglobulin family. Heterodimer of an alpha chain and a beta chain. Beta-2-microglobulin is the beta-chain of major histocompatibility complex class I molecules.

The protein localises to the secreted. Component of the class I major histocompatibility complex (MHC). Involved in the presentation of peptide antigens to the immune system. The polypeptide is Beta-2-microglobulin (b2m) (Labeobarbus intermedius (Lake tana barbels)).